A 445-amino-acid chain; its full sequence is Phosphoglucosamine mutase (445 aa).

Ser-102 functions as the Phosphoserine intermediate in the catalytic mechanism. Residues Ser-102, Asp-241, Asp-243, and Asp-245 each contribute to the Mg(2+) site. Ser-102 is subject to Phosphoserine.

Belongs to the phosphohexose mutase family. It depends on Mg(2+) as a cofactor. Post-translationally, activated by phosphorylation.

The catalysed reaction is alpha-D-glucosamine 1-phosphate = D-glucosamine 6-phosphate. In terms of biological role, catalyzes the conversion of glucosamine-6-phosphate to glucosamine-1-phosphate. This chain is Phosphoglucosamine mutase, found in Shewanella halifaxensis (strain HAW-EB4).